Consider the following 280-residue polypeptide: Acetyl-coenzyme A carboxylase carboxyl transferase subunit beta (280 aa).

Residues 28–280 form the CoA carboxyltransferase N-terminal domain; the sequence is LFLACPYCGA…IVRLHTAEAE (253 aa). Residues Cys-32, Cys-35, Cys-50, and Cys-53 each contribute to the Zn(2+) site. A C4-type zinc finger spans residues 32–53; that stretch reads CPYCGAQMYNKQLGKYRVCAKC.

Belongs to the AccD/PCCB family. In terms of assembly, acetyl-CoA carboxylase is a heterohexamer composed of biotin carboxyl carrier protein (AccB), biotin carboxylase (AccC) and two subunits each of ACCase subunit alpha (AccA) and ACCase subunit beta (AccD). Zn(2+) is required as a cofactor.

The protein resides in the cytoplasm. It carries out the reaction N(6)-carboxybiotinyl-L-lysyl-[protein] + acetyl-CoA = N(6)-biotinyl-L-lysyl-[protein] + malonyl-CoA. Its pathway is lipid metabolism; malonyl-CoA biosynthesis; malonyl-CoA from acetyl-CoA: step 1/1. Functionally, component of the acetyl coenzyme A carboxylase (ACC) complex. Biotin carboxylase (BC) catalyzes the carboxylation of biotin on its carrier protein (BCCP) and then the CO(2) group is transferred by the transcarboxylase to acetyl-CoA to form malonyl-CoA. The polypeptide is Acetyl-coenzyme A carboxylase carboxyl transferase subunit beta (Leuconostoc mesenteroides subsp. mesenteroides (strain ATCC 8293 / DSM 20343 / BCRC 11652 / CCM 1803 / JCM 6124 / NCDO 523 / NBRC 100496 / NCIMB 8023 / NCTC 12954 / NRRL B-1118 / 37Y)).